The chain runs to 240 residues: MATLFIADLHLSLHEPAITAGFLRFLRHEAIHADALYILGDLFDTWIGDDDPQPLHATIAAELYALHQLGITCYFVHGNRDFLIGKRFARQSGMTLLPTENVVDLYGQKILILHGDTLCTDDLAYQKFRRRVHNPFIQQLFLLLPLSLRLKIAAKMRASSQQANQQKSQQIMDVNPEQVLERLRHYQVKTMIHGHTHRPAIHQVDLGKSYGRRAVLGAWHEEGSMIKVTPQNIELISFPF.

The Mn(2+) site is built by D8, H10, D41, N79, and H114. 79–80 (NR) is a substrate binding site. Substrate contacts are provided by D122, S160, N164, K167, and H195. H195 and H197 together coordinate Mn(2+).

Belongs to the LpxH family. Mn(2+) is required as a cofactor.

It is found in the cell inner membrane. It catalyses the reaction UDP-2-N,3-O-bis[(3R)-3-hydroxytetradecanoyl]-alpha-D-glucosamine + H2O = 2-N,3-O-bis[(3R)-3-hydroxytetradecanoyl]-alpha-D-glucosaminyl 1-phosphate + UMP + 2 H(+). It participates in glycolipid biosynthesis; lipid IV(A) biosynthesis; lipid IV(A) from (3R)-3-hydroxytetradecanoyl-[acyl-carrier-protein] and UDP-N-acetyl-alpha-D-glucosamine: step 4/6. Hydrolyzes the pyrophosphate bond of UDP-2,3-diacylglucosamine to yield 2,3-diacylglucosamine 1-phosphate (lipid X) and UMP by catalyzing the attack of water at the alpha-P atom. Involved in the biosynthesis of lipid A, a phosphorylated glycolipid that anchors the lipopolysaccharide to the outer membrane of the cell. This chain is UDP-2,3-diacylglucosamine hydrolase, found in Pectobacterium atrosepticum (strain SCRI 1043 / ATCC BAA-672) (Erwinia carotovora subsp. atroseptica).